A 169-amino-acid chain; its full sequence is S-ribosylhomocysteine lyase (169 aa).

Positions 54, 58, and 128 each coordinate Fe cation.

The protein belongs to the LuxS family. As to quaternary structure, homodimer. Requires Fe cation as cofactor.

The enzyme catalyses S-(5-deoxy-D-ribos-5-yl)-L-homocysteine = (S)-4,5-dihydroxypentane-2,3-dione + L-homocysteine. Its function is as follows. Involved in the synthesis of autoinducer 2 (AI-2) which is secreted by bacteria and is used to communicate both the cell density and the metabolic potential of the environment. The regulation of gene expression in response to changes in cell density is called quorum sensing. Catalyzes the transformation of S-ribosylhomocysteine (RHC) to homocysteine (HC) and 4,5-dihydroxy-2,3-pentadione (DPD). The protein is S-ribosylhomocysteine lyase of Shewanella sp. (strain MR-4).